The chain runs to 431 residues: Histidine--tRNA ligase (431 aa).

The protein belongs to the class-II aminoacyl-tRNA synthetase family. As to quaternary structure, homodimer.

The protein localises to the cytoplasm. The enzyme catalyses tRNA(His) + L-histidine + ATP = L-histidyl-tRNA(His) + AMP + diphosphate + H(+). The protein is Histidine--tRNA ligase (hisS) of Leifsonia xyli subsp. xyli (strain CTCB07).